The sequence spans 753 residues: 5-methyltetrahydropteroyltriglutamate--homocysteine methyltransferase (753 aa).

Residues 17–20 and Lys-117 each bind 5-methyltetrahydropteroyltri-L-glutamate; that span reads RELK. Residues 431–433 and Glu-484 contribute to the L-homocysteine site; that span reads IGS. Residues 431 to 433 and Glu-484 contribute to the L-methionine site; that span reads IGS. Residues 515 to 516 and Trp-561 each bind 5-methyltetrahydropteroyltri-L-glutamate; that span reads RC. L-homocysteine is bound at residue Asp-599. Asp-599 provides a ligand contact to L-methionine. Position 605 (Glu-605) interacts with 5-methyltetrahydropteroyltri-L-glutamate. Residues His-641, Cys-643, and Glu-665 each contribute to the Zn(2+) site. The active-site Proton donor is the His-694. Cys-726 is a binding site for Zn(2+).

It belongs to the vitamin-B12 independent methionine synthase family. Zn(2+) is required as a cofactor.

It carries out the reaction 5-methyltetrahydropteroyltri-L-glutamate + L-homocysteine = tetrahydropteroyltri-L-glutamate + L-methionine. Its pathway is amino-acid biosynthesis; L-methionine biosynthesis via de novo pathway; L-methionine from L-homocysteine (MetE route): step 1/1. Functionally, catalyzes the transfer of a methyl group from 5-methyltetrahydrofolate to homocysteine resulting in methionine formation. The chain is 5-methyltetrahydropteroyltriglutamate--homocysteine methyltransferase from Escherichia coli O9:H4 (strain HS).